A 464-amino-acid polypeptide reads, in one-letter code: Asparagine--tRNA ligase (464 aa).

Belongs to the class-II aminoacyl-tRNA synthetase family. As to quaternary structure, homodimer.

Its subcellular location is the cytoplasm. It carries out the reaction tRNA(Asn) + L-asparagine + ATP = L-asparaginyl-tRNA(Asn) + AMP + diphosphate + H(+). The chain is Asparagine--tRNA ligase from Clostridium beijerinckii (strain ATCC 51743 / NCIMB 8052) (Clostridium acetobutylicum).